Consider the following 117-residue polypeptide: Ribosome-binding factor A (117 aa).

The protein belongs to the RbfA family. Monomer. Binds 30S ribosomal subunits, but not 50S ribosomal subunits or 70S ribosomes.

It is found in the cytoplasm. In terms of biological role, one of several proteins that assist in the late maturation steps of the functional core of the 30S ribosomal subunit. Associates with free 30S ribosomal subunits (but not with 30S subunits that are part of 70S ribosomes or polysomes). Required for efficient processing of 16S rRNA. May interact with the 5'-terminal helix region of 16S rRNA. The chain is Ribosome-binding factor A from Bacillus subtilis (strain 168).